The sequence spans 258 residues: Phosphoribosylformylglycinamidine synthase subunit PurQ (258 aa).

The 232-residue stretch at 7–238 folds into the Glutamine amidotransferase type-1 domain; the sequence is IGILLMEGTN…QAMYLETEKD (232 aa). C97 acts as the Nucleophile in catalysis. Catalysis depends on residues H220 and E222.

Part of the FGAM synthase complex composed of 1 PurL, 1 PurQ and 2 PurS subunits.

The protein localises to the cytoplasm. It catalyses the reaction N(2)-formyl-N(1)-(5-phospho-beta-D-ribosyl)glycinamide + L-glutamine + ATP + H2O = 2-formamido-N(1)-(5-O-phospho-beta-D-ribosyl)acetamidine + L-glutamate + ADP + phosphate + H(+). The catalysed reaction is L-glutamine + H2O = L-glutamate + NH4(+). The protein operates within purine metabolism; IMP biosynthesis via de novo pathway; 5-amino-1-(5-phospho-D-ribosyl)imidazole from N(2)-formyl-N(1)-(5-phospho-D-ribosyl)glycinamide: step 1/2. In terms of biological role, part of the phosphoribosylformylglycinamidine synthase complex involved in the purines biosynthetic pathway. Catalyzes the ATP-dependent conversion of formylglycinamide ribonucleotide (FGAR) and glutamine to yield formylglycinamidine ribonucleotide (FGAM) and glutamate. The FGAM synthase complex is composed of three subunits. PurQ produces an ammonia molecule by converting glutamine to glutamate. PurL transfers the ammonia molecule to FGAR to form FGAM in an ATP-dependent manner. PurS interacts with PurQ and PurL and is thought to assist in the transfer of the ammonia molecule from PurQ to PurL. The sequence is that of Phosphoribosylformylglycinamidine synthase subunit PurQ from Thermoplasma volcanium (strain ATCC 51530 / DSM 4299 / JCM 9571 / NBRC 15438 / GSS1).